We begin with the raw amino-acid sequence, 108 residues long: Glutaredoxin-1 (108 aa).

Residues 3 to 106 (EEFVQQRLTN…DILSSIGVLR (104 aa)) form the Glutaredoxin domain. A disulfide bond links Cys-23 and Cys-26.

This sequence belongs to the glutaredoxin family.

It is found in the virion. Displays thioltransferase and dehydroascorbate reductase activities. The protein is Glutaredoxin-1 (OPG075) of Variola virus (isolate Human/India/Ind3/1967) (VARV).